The chain runs to 308 residues: CASP-like protein 4A2 (308 aa).

The interval methionine 1 to alanine 135 is disordered. Topologically, residues methionine 1 to threonine 161 are cytoplasmic. The span at glycine 22–alanine 31 shows a compositional bias: gly residues. Residues glycine 32–glycine 44 show a composition bias toward low complexity. 2 stretches are compositionally biased toward pro residues: residues arginine 54–proline 65 and phenylalanine 89–arginine 132. A helical membrane pass occupies residues alanine 162–alanine 182. The Extracellular portion of the chain corresponds to aspartate 183 to glutamate 203. Residue asparagine 195 is glycosylated (N-linked (GlcNAc...) asparagine). Residues alanine 204–methionine 224 form a helical membrane-spanning segment. At arginine 225 to aspartate 240 the chain is on the cytoplasmic side. A helical membrane pass occupies residues phenylalanine 241–valine 262. Topologically, residues glycine 263–serine 280 are extracellular. N-linked (GlcNAc...) asparagine glycosylation is present at asparagine 279. A helical transmembrane segment spans residues serine 281–tyrosine 301. The Cytoplasmic portion of the chain corresponds to asparagine 302–isoleucine 308.

Belongs to the Casparian strip membrane proteins (CASP) family. Homodimer and heterodimers.

It is found in the cell membrane. This chain is CASP-like protein 4A2, found in Oryza sativa subsp. japonica (Rice).